The primary structure comprises 295 residues: Acetaldehyde dehydrogenase (295 aa).

Residue 11–14 participates in NAD(+) binding; sequence SGNI. The active-site Acyl-thioester intermediate is Cys127. NAD(+) is bound by residues 158–166 and Asn269; that span reads SAGPGTRSN.

The protein belongs to the acetaldehyde dehydrogenase family.

The catalysed reaction is acetaldehyde + NAD(+) + CoA = acetyl-CoA + NADH + H(+). The sequence is that of Acetaldehyde dehydrogenase from Brevibacillus brevis (strain 47 / JCM 6285 / NBRC 100599).